The chain runs to 316 residues: Galectin-8 (316 aa).

Galectin domains are found at residues 18 to 151 and 186 to 316; these read YVST…IGFR and FEAR…VRSW. A carbohydrate-binding residues include arginine 68, asparagine 78, and glutamate 88. A beta-D-galactoside is bound at residue 248 to 254; the sequence is WGEEERN.

In terms of assembly, homodimer. Interacts with CALCOCO2/NDP52. Interacts with PDPN; the interaction is glycosylation-dependent; may participate in connection of the lymphatic endothelium to the surrounding extracellular matrix. In terms of tissue distribution, expressed in liver, kidney, cardiac muscle, lung, and brain.

The protein resides in the cytoplasmic vesicle. Its subcellular location is the cytoplasm. The protein localises to the cytosol. Functionally, beta-galactoside-binding lectin that acts as a sensor of membrane damage caused by infection and restricts the proliferation of infecting pathogens by targeting them for autophagy. Detects membrane rupture by binding beta-galactoside ligands located on the lumenal side of the endosome membrane; these ligands becoming exposed to the cytoplasm following rupture. Restricts infection by initiating autophagy via interaction with CALCOCO2/NDP52. Required to restrict infection of bacterial invasion such as S.typhimurium. Also required to restrict infection of Picornaviridae viruses. Has a marked preference for 3'-O-sialylated and 3'-O-sulfated glycans. This Rattus norvegicus (Rat) protein is Galectin-8 (Lgals8).